We begin with the raw amino-acid sequence, 20 residues long: Elastase (20 aa).

The 20-residue stretch at 1 to 20 folds into the Peptidase S1 domain; it reads VVGGEVARAHSWPWQISLQY.

It belongs to the peptidase S1 family. Elastase subfamily.

Digests most rapidly at the C-terminal side of alanine residues, but also cleaves at valine and leucine residues. This Gadus morhua (Atlantic cod) protein is Elastase.